The primary structure comprises 112 residues: 2Fe-2S ferredoxin (112 aa).

One can recognise a 2Fe-2S ferredoxin-type domain in the interval 5–107 (IKVTFIVNDG…GIKVRLPSAT (103 aa)). The [2Fe-2S] cluster site is built by Cys-42, Cys-48, Cys-51, and Cys-88.

It belongs to the adrenodoxin/putidaredoxin family. The cofactor is [2Fe-2S] cluster.

In terms of biological role, ferredoxin are iron-sulfur proteins that transfer electrons in a wide variety of metabolic reactions. This is 2Fe-2S ferredoxin (fdxB) from Rickettsia felis (strain ATCC VR-1525 / URRWXCal2) (Rickettsia azadi).